The chain runs to 476 residues: Cytosolic iron-sulfur assembly component 3 (476 aa).

A2 is subject to N-acetylalanine. Residues C24, C71, C74, C77, C190, and C246 each coordinate [4Fe-4S] cluster. Residues 297 to 316 are disordered; sequence DGLTSSVSAEEPSSHRGGGS. [4Fe-4S] cluster-binding residues include C395 and C399.

This sequence belongs to the NARF family. In terms of assembly, external component of the CIA complex. In the CIA complex, interacts directly with CIAO1 and MMS19.

Component of the cytosolic iron-sulfur protein assembly (CIA) complex, a multiprotein complex that mediates the incorporation of iron-sulfur cluster into extramitochondrial Fe/S proteins. Seems to negatively regulate the level of HIF1A expression, although this effect could be indirect. The polypeptide is Cytosolic iron-sulfur assembly component 3 (Ciao3) (Mus musculus (Mouse)).